Here is a 418-residue protein sequence, read N- to C-terminus: MRIAVLGLGYIGLPTAIMFASSGYDVVGYDIRSEVIKKINSGVAHIIEPEIDRRLKEVLSLGKLKVTDRVEDLKGSNVFIICVQTPLSGDDPDLSYLERAIRTVAEVMDRGALVIIESTIPPGTTEKMARLLENLTGLREGVDFYVAHAPERVMPGRIFKELVYNSRIIGGVSEKAANLAEKLYRSFVKGRIFLTNATTAEMVKLMENTFRDVNIALANEFALLAHQYGVNVYEAIELANTHPRVKIHTPGIGVGGHCLPKDPYLLLSNAKEDFGLIRIARRINERMPAFAAGLLFEALEKANIKPSEAIIAVLGLAYKGGTDDTRNSPALKFVEIIRNSVKEVRTYDPYVRGTHDSLEKVVEGADAIVIATDHPEFKSVNWESIGKSMRHKIIIDGRNIIKEPPVGFIFRGIGRGDV.

NAD(+)-binding residues include Tyr10, Ile11, Asp30, Thr85, and Thr119. UDP-N-acetyl-alpha-D-mannosaminouronate contacts are provided by Arg152, Val153, Lys204, Asn208, Arg211, His242, Arg244, Thr249, and Gly255. Residue Lys204 is the Proton donor/acceptor of the active site. The Nucleophile role is filled by Cys258. Lys261 is a binding site for NAD(+). Positions 318 and 319 each coordinate UDP-N-acetyl-alpha-D-mannosaminouronate. An NAD(+)-binding site is contributed by Arg326. UDP-N-acetyl-alpha-D-mannosaminouronate is bound at residue Arg398.

This sequence belongs to the UDP-glucose/GDP-mannose dehydrogenase family. In terms of assembly, homodimer.

The enzyme catalyses UDP-N-acetyl-alpha-D-mannosamine + 2 NAD(+) + H2O = UDP-N-acetyl-alpha-D-mannosaminouronate + 2 NADH + 3 H(+). In terms of biological role, catalyzes the four-electron oxidation of UDP-N-acetyl-D-mannosamine (UDP-ManNAc), reducing NAD(+) and releasing UDP-N-acetylmannosaminuronic acid (UDP-ManNAcA). The protein is UDP-N-acetyl-D-mannosamine dehydrogenase of Pyrococcus horikoshii (strain ATCC 700860 / DSM 12428 / JCM 9974 / NBRC 100139 / OT-3).